The primary structure comprises 380 residues: MAFALRGVTAKASGRTAGARSSGRTLTVRVQAYGMAAEYIWADGNEGKPEKGMIFNEMRSKTKCFEAPLGLDASEYPDWSFDGSSTGQAEGNNSDCILRPVRVVTDPIRGAPHVLVMCEVFAPDGKPHSTNTRAKLREIIDDKVTAEDCWYGFEQEYTMLAKTSGHIYGWPAGGFPAPQGPFYCGVGAESAFGRPLAEAHMEACMKAGLVISGINAEVMPGQWEYQIGPVGPLALGDEVMLSRWLLHRLGEDFGIVSTFNPKPVRTGDWNGTGAHTNFSTKGMRVPGGMKVIEEAVEKLSKTHIEHITQYGIGNEARLTGKHETCDINTFKHGVADRGSSIRIPLPVMLKGYGYLEDRRPAANVDPYTVARLLIKTVLKG.

In terms of domain architecture, GS beta-grasp spans 35-125 (MAAEYIWADG…VMCEVFAPDG (91 aa)). One can recognise a GS catalytic domain in the interval 132–380 (TRAKLREIID…RLLIKTVLKG (249 aa)).

The protein belongs to the glutamine synthetase family. As to quaternary structure, homooctamer.

The protein resides in the plastid. The protein localises to the chloroplast. It catalyses the reaction L-glutamate + NH4(+) + ATP = L-glutamine + ADP + phosphate + H(+). In Chlamydomonas reinhardtii (Chlamydomonas smithii), this protein is Glutamine synthetase, chloroplastic (GLN2).